A 343-amino-acid polypeptide reads, in one-letter code: Biotin synthase 2 (343 aa).

One can recognise a Radical SAM core domain in the interval 58 to 285 (NEVQLSTLLS…LTMVRLSAGR (228 aa)). [4Fe-4S] cluster is bound by residues C73, C77, and C80. 4 residues coordinate [2Fe-2S] cluster: C117, C148, C208, and R280.

It belongs to the radical SAM superfamily. Biotin synthase family. As to quaternary structure, homodimer. It depends on [4Fe-4S] cluster as a cofactor. [2Fe-2S] cluster is required as a cofactor.

The catalysed reaction is (4R,5S)-dethiobiotin + (sulfur carrier)-SH + 2 reduced [2Fe-2S]-[ferredoxin] + 2 S-adenosyl-L-methionine = (sulfur carrier)-H + biotin + 2 5'-deoxyadenosine + 2 L-methionine + 2 oxidized [2Fe-2S]-[ferredoxin]. It participates in cofactor biosynthesis; biotin biosynthesis; biotin from 7,8-diaminononanoate: step 2/2. Functionally, catalyzes the conversion of dethiobiotin (DTB) to biotin by the insertion of a sulfur atom into dethiobiotin via a radical-based mechanism. This is Biotin synthase 2 from Polaromonas sp. (strain JS666 / ATCC BAA-500).